The sequence spans 214 residues: Octanoyltransferase (214 aa).

A BPL/LPL catalytic domain is found at 29 to 214 (STTPDEIWIL…EHLQKQLMPT (186 aa)). Residues 69 to 76 (RGGEITYH), 146 to 148 (ALG), and 159 to 161 (GLA) contribute to the substrate site. Cys177 (acyl-thioester intermediate) is an active-site residue.

The protein belongs to the LipB family.

The protein resides in the cytoplasm. The enzyme catalyses octanoyl-[ACP] + L-lysyl-[protein] = N(6)-octanoyl-L-lysyl-[protein] + holo-[ACP] + H(+). The protein operates within protein modification; protein lipoylation via endogenous pathway; protein N(6)-(lipoyl)lysine from octanoyl-[acyl-carrier-protein]: step 1/2. Its function is as follows. Catalyzes the transfer of endogenously produced octanoic acid from octanoyl-acyl-carrier-protein onto the lipoyl domains of lipoate-dependent enzymes. Lipoyl-ACP can also act as a substrate although octanoyl-ACP is likely to be the physiological substrate. In Polynucleobacter asymbioticus (strain DSM 18221 / CIP 109841 / QLW-P1DMWA-1) (Polynucleobacter necessarius subsp. asymbioticus), this protein is Octanoyltransferase.